The following is a 633-amino-acid chain: General amino acid permease AGP1 (633 aa).

The Cytoplasmic portion of the chain corresponds to 1-124; the sequence is MSSSKSLYEL…SLKKTIQPRH (124 aa). S6 bears the Phosphoserine mark. K11 participates in a covalent cross-link: Glycyl lysine isopeptide (Lys-Gly) (interchain with G-Cter in ubiquitin). Disordered stretches follow at residues 32 to 52 and 86 to 116; these read FETGSNDRPSSQPHLGYEQHN and ISPSSRQAQELEKNESSDNIGANTGHKSDSL. Polar residues predominate over residues 34-52; the sequence is TGSNDRPSSQPHLGYEQHN. A helical transmembrane segment spans residues 125–145; it reads VLMIALGTGIGTGLLVGNGTA. Topologically, residues 146-148 are extracellular; sequence LVH. The chain crosses the membrane as a helical span at residues 149-169; the sequence is AGPAGLLIGYAIMGSILYCII. At 170-197 the chain is on the cytoplasmic side; sequence QACGEMALVYSNLTGGYNAYPSFLVDDG. Residues 198 to 218 traverse the membrane as a helical segment; that stretch reads FGFAVAWVYCLQWLCVCPLEL. The Extracellular segment spans residues 219–231; the sequence is VTASMTIKYWTTS. A helical transmembrane segment spans residues 232-252; it reads VNPDVFVIIFYVLVITINIFG. Residues 253 to 260 are Cytoplasmic-facing; the sequence is ARGYAEAE. A helical membrane pass occupies residues 261–281; that stretch reads FFFNCCKILMMTGFFILGIII. The Extracellular segment spans residues 282–313; sequence DVGGAGNDGFIGGKYWHDPGAFNGKHAIDRFK. A helical transmembrane segment spans residues 314-334; the sequence is GVAATLVTAAFAFGGSEFIAI. Over 335–352 the chain is Cytoplasmic; that stretch reads TTAEQSNPRKAIPGAAKQ. The chain crosses the membrane as a helical span at residues 353 to 373; the sequence is MIYRILFLFLATIILLGFLVP. Over 374–402 the chain is Extracellular; sequence YNSDQLLGSTGGGTKASPYVIAVASHGVR. The helical transmembrane segment at 403 to 425 threads the bilayer; the sequence is VVPHFINAVILLSVLSMANSSFY. The Cytoplasmic segment spans residues 426-452; it reads SSARLFLTLSEQGYAPKVFSYIDRAGR. The helical transmembrane segment at 453–473 threads the bilayer; that stretch reads PLIAMGVSALFAVIAFCAASP. Residues 474–477 are Extracellular-facing; the sequence is KEEQ. The helical transmembrane segment at 478 to 498 threads the bilayer; the sequence is VFTWLLAISGLSQLFTWTAIC. At 499 to 531 the chain is on the cytoplasmic side; the sequence is LSHLRFRRAMKVQGRSLGELGFKSQTGVWGSAY. A helical membrane pass occupies residues 532–552; that stretch reads ACIMMILILIAQFWVAIAPIG. Topologically, residues 553–560 are extracellular; the sequence is EGKLDAQA. The helical transmembrane segment at 561–581 threads the bilayer; it reads FFENYLAMPILIALYVGYKVW. The Cytoplasmic segment spans residues 582–633; sequence HKDWKLFIRADKIDLDSHRQIFDEELIKQEDEEYRERLRNGPYWKRVVAFWC. A lipid anchor (S-palmitoyl cysteine) is attached at C633.

This sequence belongs to the amino acid-polyamine-organocation (APC) superfamily. YAT (TC 2.A.3.10) family. Palmitoylated by PFA4.

It localises to the cell membrane. Functionally, broad substrate range permease which transports asparagine and glutamine with intermediate specificity. Also transports Ala, Cys, Gly, Ile, Leu, Met, Phe, Ser, Thr, Tyr and Val. Important for the utilization of amino acids as a nitrogen source. The polypeptide is General amino acid permease AGP1 (AGP1) (Saccharomyces cerevisiae (strain ATCC 204508 / S288c) (Baker's yeast)).